The chain runs to 493 residues: Probable malate:quinone oxidoreductase (493 aa).

Belongs to the MQO family. The cofactor is FAD.

The catalysed reaction is (S)-malate + a quinone = a quinol + oxaloacetate. It participates in carbohydrate metabolism; tricarboxylic acid cycle; oxaloacetate from (S)-malate (quinone route): step 1/1. This Mycobacterium tuberculosis (strain ATCC 25177 / H37Ra) protein is Probable malate:quinone oxidoreductase.